The chain runs to 85 residues: Depressant insect toxin BmK ITa1 (85 aa).

A signal peptide spans 1 to 21 (MKLFLLLLISASMLIDGLVNA). In terms of domain architecture, LCN-type CS-alpha/beta spans 22–82 (DGYIRGSNGC…TWKSESNTCG (61 aa)). 4 disulfides stabilise this stretch: cysteine 31-cysteine 81, cysteine 35-cysteine 56, cysteine 42-cysteine 63, and cysteine 46-cysteine 65. Glycine 82 bears the Glycine amide mark.

Belongs to the long (4 C-C) scorpion toxin superfamily. Sodium channel inhibitor family. Beta subfamily. Expressed by the venom gland.

Its subcellular location is the secreted. Depressant insect toxins cause a transient contraction paralysis followed by a slow flaccid paralysis. They bind voltage-independently to sodium channels (Nav) and block action potentials, primarily by depolarizing the axonal membrane and suppressing the sodium current. This Olivierus martensii (Manchurian scorpion) protein is Depressant insect toxin BmK ITa1.